A 122-amino-acid chain; its full sequence is Large ribosomal subunit protein bL12 (122 aa).

It belongs to the bacterial ribosomal protein bL12 family. Homodimer. Part of the ribosomal stalk of the 50S ribosomal subunit. Forms a multimeric L10(L12)X complex, where L10 forms an elongated spine to which 2 to 4 L12 dimers bind in a sequential fashion. Binds GTP-bound translation factors.

Forms part of the ribosomal stalk which helps the ribosome interact with GTP-bound translation factors. Is thus essential for accurate translation. In Blochmanniella pennsylvanica (strain BPEN), this protein is Large ribosomal subunit protein bL12.